The primary structure comprises 376 residues: UPF0754 membrane protein BH1148 (376 aa).

2 helical membrane-spanning segments follow: residues 3–23 (LILF…SLAI) and 355–375 (YLGA…ILLI).

Belongs to the UPF0754 family.

The protein resides in the cell membrane. This chain is UPF0754 membrane protein BH1148, found in Halalkalibacterium halodurans (strain ATCC BAA-125 / DSM 18197 / FERM 7344 / JCM 9153 / C-125) (Bacillus halodurans).